Consider the following 208-residue polypeptide: Na(+)-translocating NADH-quinone reductase subunit D (208 aa).

Transmembrane regions (helical) follow at residues 42-62 (IVMTFAVIFVTAFSNLFISLI), 70-90 (VRIIVQMAIIASLVILVDQIL), 103-123 (VFVGLIITNCIVMGRAEAFAM), 131-151 (FVDGIGNGLGYGAILVSVAFI), and 178-198 (NGLFLLAPSAFFIIGFIIWGI).

Belongs to the NqrDE/RnfAE family. Composed of six subunits; NqrA, NqrB, NqrC, NqrD, NqrE and NqrF.

Its subcellular location is the cell inner membrane. It carries out the reaction a ubiquinone + n Na(+)(in) + NADH + H(+) = a ubiquinol + n Na(+)(out) + NAD(+). Its function is as follows. NQR complex catalyzes the reduction of ubiquinone-1 to ubiquinol by two successive reactions, coupled with the transport of Na(+) ions from the cytoplasm to the periplasm. NqrA to NqrE are probably involved in the second step, the conversion of ubisemiquinone to ubiquinol. The sequence is that of Na(+)-translocating NADH-quinone reductase subunit D from Pasteurella multocida (strain Pm70).